The chain runs to 241 residues: Octanoyltransferase (241 aa).

The 190-residue stretch at 38–227 (AGGPDTLLLL…AVCNALDGAL (190 aa)) folds into the BPL/LPL catalytic domain. Substrate is bound by residues 85 to 92 (RGGKITWH), 157 to 159 (AIG), and 170 to 172 (GFA). Residue C188 is the Acyl-thioester intermediate of the active site.

It belongs to the LipB family.

The protein localises to the cytoplasm. The catalysed reaction is octanoyl-[ACP] + L-lysyl-[protein] = N(6)-octanoyl-L-lysyl-[protein] + holo-[ACP] + H(+). It functions in the pathway protein modification; protein lipoylation via endogenous pathway; protein N(6)-(lipoyl)lysine from octanoyl-[acyl-carrier-protein]: step 1/2. Functionally, catalyzes the transfer of endogenously produced octanoic acid from octanoyl-acyl-carrier-protein onto the lipoyl domains of lipoate-dependent enzymes. Lipoyl-ACP can also act as a substrate although octanoyl-ACP is likely to be the physiological substrate. The polypeptide is Octanoyltransferase (Mycobacterium marinum (strain ATCC BAA-535 / M)).